Reading from the N-terminus, the 161-residue chain is Cyclic pyranopterin monophosphate synthase (161 aa).

Substrate contacts are provided by residues 75–77 and 113–114; these read LCH and ME. The active site involves aspartate 128.

The protein belongs to the MoaC family. Homohexamer; trimer of dimers.

The catalysed reaction is (8S)-3',8-cyclo-7,8-dihydroguanosine 5'-triphosphate = cyclic pyranopterin phosphate + diphosphate. It functions in the pathway cofactor biosynthesis; molybdopterin biosynthesis. In terms of biological role, catalyzes the conversion of (8S)-3',8-cyclo-7,8-dihydroguanosine 5'-triphosphate to cyclic pyranopterin monophosphate (cPMP). The chain is Cyclic pyranopterin monophosphate synthase from Edwardsiella ictaluri (strain 93-146).